Consider the following 429-residue polypeptide: Ribosomal RNA small subunit methyltransferase B (429 aa).

Residues 254–260, Asp277, Asp303, and Asp322 contribute to the S-adenosyl-L-methionine site; that span reads CAAPGGK. Cys375 acts as the Nucleophile in catalysis.

The protein belongs to the class I-like SAM-binding methyltransferase superfamily. RsmB/NOP family.

The protein localises to the cytoplasm. It carries out the reaction cytidine(967) in 16S rRNA + S-adenosyl-L-methionine = 5-methylcytidine(967) in 16S rRNA + S-adenosyl-L-homocysteine + H(+). Its function is as follows. Specifically methylates the cytosine at position 967 (m5C967) of 16S rRNA. The polypeptide is Ribosomal RNA small subunit methyltransferase B (Shigella boydii serotype 18 (strain CDC 3083-94 / BS512)).